The chain runs to 465 residues: ATP synthase subunit beta 2 (465 aa).

Residue 148–155 participates in ATP binding; the sequence is GGAGVGKT.

Belongs to the ATPase alpha/beta chains family. F-type ATPases have 2 components, CF(1) - the catalytic core - and CF(0) - the membrane proton channel. CF(1) has five subunits: alpha(3), beta(3), gamma(1), delta(1), epsilon(1). CF(0) has three main subunits: a(1), b(2) and c(9-12). The alpha and beta chains form an alternating ring which encloses part of the gamma chain. CF(1) is attached to CF(0) by a central stalk formed by the gamma and epsilon chains, while a peripheral stalk is formed by the delta and b chains.

The protein localises to the cell inner membrane. It catalyses the reaction ATP + H2O + 4 H(+)(in) = ADP + phosphate + 5 H(+)(out). Produces ATP from ADP in the presence of a proton gradient across the membrane. The catalytic sites are hosted primarily by the beta subunits. This chain is ATP synthase subunit beta 2, found in Psychromonas ingrahamii (strain DSM 17664 / CCUG 51855 / 37).